Consider the following 492-residue polypeptide: Protein nucleotidyltransferase YdiU (492 aa).

ATP-binding residues include Gly-88, Gly-90, Arg-91, Lys-111, Asp-123, Gly-124, Arg-174, and Arg-181. Catalysis depends on Asp-250, which acts as the Proton acceptor. Mg(2+) is bound by residues Asn-251 and Asp-260. Position 260 (Asp-260) interacts with ATP.

Belongs to the SELO family. Requires Mg(2+) as cofactor. It depends on Mn(2+) as a cofactor.

The catalysed reaction is L-seryl-[protein] + ATP = 3-O-(5'-adenylyl)-L-seryl-[protein] + diphosphate. It carries out the reaction L-threonyl-[protein] + ATP = 3-O-(5'-adenylyl)-L-threonyl-[protein] + diphosphate. It catalyses the reaction L-tyrosyl-[protein] + ATP = O-(5'-adenylyl)-L-tyrosyl-[protein] + diphosphate. The enzyme catalyses L-histidyl-[protein] + UTP = N(tele)-(5'-uridylyl)-L-histidyl-[protein] + diphosphate. The catalysed reaction is L-seryl-[protein] + UTP = O-(5'-uridylyl)-L-seryl-[protein] + diphosphate. It carries out the reaction L-tyrosyl-[protein] + UTP = O-(5'-uridylyl)-L-tyrosyl-[protein] + diphosphate. Its function is as follows. Nucleotidyltransferase involved in the post-translational modification of proteins. It can catalyze the addition of adenosine monophosphate (AMP) or uridine monophosphate (UMP) to a protein, resulting in modifications known as AMPylation and UMPylation. The protein is Protein nucleotidyltransferase YdiU of Rhodopseudomonas palustris (strain ATCC BAA-98 / CGA009).